Consider the following 601-residue polypeptide: Proteasome-associated ATPase (601 aa).

A compositionally biased stretch (gly residues) spans 1–15 (MSGPRSGSGSGGSTG). The disordered stretch occupies residues 1–29 (MSGPRSGSGSGGSTGRPGDADSQRSAYEK). Over residues 18–29 (GDADSQRSAYEK) the composition is skewed to basic and acidic residues. Positions 19 to 106 (DADSQRSAYE…LKEEVDRLAQ (88 aa)) form a coiled coil. ATP is bound at residue 289–294 (GCGKTL). Residues 600–601 (YL) form a docks into pockets in the proteasome alpha-ring region.

Belongs to the AAA ATPase family. Homohexamer. Assembles into a hexameric ring structure that caps the 20S proteasome core. Strongly interacts with the prokaryotic ubiquitin-like protein Pup through a hydrophobic interface; the interacting region of ARC lies in its N-terminal coiled-coil domain. There is one Pup binding site per ARC hexamer ring. Upon ATP-binding, the C-terminus of ARC interacts with the alpha-rings of the proteasome core, possibly by binding to the intersubunit pockets.

Its pathway is protein degradation; proteasomal Pup-dependent pathway. In terms of biological role, ATPase which is responsible for recognizing, binding, unfolding and translocation of pupylated proteins into the bacterial 20S proteasome core particle. May be essential for opening the gate of the 20S proteasome via an interaction with its C-terminus, thereby allowing substrate entry and access to the site of proteolysis. Thus, the C-termini of the proteasomal ATPase may function like a 'key in a lock' to induce gate opening and therefore regulate proteolysis. This chain is Proteasome-associated ATPase, found in Parafrankia sp. (strain EAN1pec).